Reading from the N-terminus, the 528-residue chain is Membrane protein insertase YidC (528 aa).

Helical transmembrane passes span 5-25 (VVIA…IFPP), 346-366 (YGIA…PLTH), 416-436 (LPMI…MFSI), and 486-506 (MLAL…GLVL).

This sequence belongs to the OXA1/ALB3/YidC family. Type 1 subfamily. Interacts with the Sec translocase complex via SecD. Specifically interacts with transmembrane segments of nascent integral membrane proteins during membrane integration.

The protein resides in the cell inner membrane. Functionally, required for the insertion and/or proper folding and/or complex formation of integral membrane proteins into the membrane. Involved in integration of membrane proteins that insert both dependently and independently of the Sec translocase complex, as well as at least some lipoproteins. Aids folding of multispanning membrane proteins. In Geotalea uraniireducens (strain Rf4) (Geobacter uraniireducens), this protein is Membrane protein insertase YidC.